The primary structure comprises 2167 residues: Beige protein homolog 1 (2167 aa).

The region spanning 1368-1499 (KDNDSIATIW…VRDDVLRVLN (132 aa)) is the BEACH-type PH domain. A BEACH domain is found at 1545–1839 (SANNSLIDGF…QIFQEPHPEK (295 aa)). A Glycyl lysine isopeptide (Lys-Gly) (interchain with G-Cter in ubiquitin) cross-link involves residue Lys-1667. WD repeat units lie at residues 1927–1965 (THMAQITSFAYWKLGEFITGDKNGLIKVWKYRKDKHSVS), 1976–2015 (GHLCELKEMRCYHDYNTLLTLDISGLVYVWDMINFELVRQ), 2017–2054 (TNDAQKVAISQHAGSIMVLTKNNAISIFNLNGQIYTSK), 2072–2111 (KLDAGYRKHIYWKEMEILLVGFEDGTIEIYELFLNFHNEW), and 2129–2167 (SIKGQGKTYLSQKRRKDTAEPHEIEVIAGTLDGRLAIWY).

It is found in the cytoplasm. It localises to the membrane. In terms of biological role, may be involved in protein sorting and cell wall formation. This Saccharomyces cerevisiae (strain ATCC 204508 / S288c) (Baker's yeast) protein is Beige protein homolog 1 (BPH1).